We begin with the raw amino-acid sequence, 616 residues long: Replication protein A 70 kDa DNA-binding subunit (616 aa).

The residue at position 1 (M1) is an N-acetylmethionine. Residues K22 and K88 each participate in a glycyl lysine isopeptide (Lys-Gly) (interchain with G-Cter in ubiquitin) cross-link. A disordered region spans residues 121 to 155 (GLGQPQVAPPAPAASPAASSRPQPQNGTSGAGSTV). The segment covering 134–145 (ASPAASSRPQPQ) has biased composition (low complexity). Over residues 146–155 (NGTSGAGSTV) the composition is skewed to polar residues. 2 positions are modified to N6-acetyllysine; alternate: K163 and K167. Residues K163 and K167 each participate in a glycyl lysine isopeptide (Lys-Gly) (interchain with G-Cter in ubiquitin); alternate cross-link. T180 is modified (phosphothreonine). K183 is covalently cross-linked (Glycyl lysine isopeptide (Lys-Gly) (interchain with G-Cter in ubiquitin)). Phosphothreonine is present on T191. Residues 197–281 (WTICARVTNK…VKNDYEMTFN (85 aa)) constitute a DNA-binding region (OB). Residues K220 and K244 each participate in a glycyl lysine isopeptide (Lys-Gly) (interchain with G-Cter in ubiquitin) cross-link. K259 carries the post-translational modification N6-acetyllysine; alternate. K259 is covalently cross-linked (Glycyl lysine isopeptide (Lys-Gly) (interchain with G-Cter in ubiquitin); alternate). Glycyl lysine isopeptide (Lys-Gly) (interchain with G-Cter in ubiquitin) cross-links involve residues K267 and K331. The residue at position 384 (S384) is a Phosphoserine. Glycyl lysine isopeptide (Lys-Gly) (interchain with G-Cter in ubiquitin) cross-links involve residues K410 and K431. Residue K449 forms a Glycyl lysine isopeptide (Lys-Gly) (interchain with G-Cter in SUMO) linkage. A Glycyl lysine isopeptide (Lys-Gly) (interchain with G-Cter in ubiquitin) cross-link involves residue K458. Residues 481–503 (CPTQDCNKKVIDQQNGLYRCEKC) form a C4-type zinc finger. K553 is covalently cross-linked (Glycyl lysine isopeptide (Lys-Gly) (interchain with G-Cter in ubiquitin)). K577 participates in a covalent cross-link: Glycyl lysine isopeptide (Lys-Gly) (interchain with G-Cter in SUMO).

The protein belongs to the replication factor A protein 1 family. As to quaternary structure, component of the canonical replication protein A complex (RPA), a heterotrimer composed of RPA1, RPA2 and RPA3. The DNA-binding activity may reside exclusively on the RPA1 subunit. Interacts with PRPF19; the PRP19-CDC5L complex is recruited to the sites of DNA repair where it ubiquitinates the replication protein A complex (RPA). Interacts with RIPK1. Interacts with the polymerase alpha subunit POLA1/p180; this interaction stabilizes the replicative complex and reduces the misincorporation rate of DNA polymerase alpha by acting as a fidelity clamp. Interacts with RAD51 and SENP6 to regulate DNA repair. Interacts with HELB; this interaction promotes HELB recruitment to chromatin following DNA damage. Interacts with PRIMPOL; leading to recruit PRIMPOL on chromatin and stimulate its DNA primase activity. Interacts with XPA; the interaction is direct and associates XPA with the RPA complex. Interacts with ETAA1; the interaction is direct and promotes ETAA1 recruitment at stalled replication forks. Interacts with RPA1; this interaction associates HROB with the RPA complex. Interacts (when poly-ADP-ribosylated) with HTATSF1. DNA damage-induced 'Lys-63'-linked polyubiquitination by PRPF19 mediates ATRIP recruitment to the RPA complex at sites of DNA damage and activation of ATR. Ubiquitinated by RFWD3 at stalled replication forks in response to DNA damage: ubiquitination by RFWD3 does not lead to degradation by the proteasome and promotes removal of the RPA complex from stalled replication forks, promoting homologous recombination. Post-translationally, sumoylated on lysine residues Lys-449 and Lys-577, with Lys-449 being the major site. Sumoylation promotes recruitment of RAD51 to the DNA damage foci to initiate DNA repair through homologous recombination. Desumoylated by SENP6. In terms of processing, poly-ADP-ribosylated by PARP1; promoting recruitment of HTATSF1.

The protein resides in the nucleus. It is found in the PML body. Functionally, as part of the heterotrimeric replication protein A complex (RPA/RP-A), binds and stabilizes single-stranded DNA intermediates, that form during DNA replication or upon DNA stress. It prevents their reannealing and in parallel, recruits and activates different proteins and complexes involved in DNA metabolism. Thereby, it plays an essential role both in DNA replication and the cellular response to DNA damage. In the cellular response to DNA damage, the RPA complex controls DNA repair and DNA damage checkpoint activation. Through recruitment of ATRIP activates the ATR kinase a master regulator of the DNA damage response. It is required for the recruitment of the DNA double-strand break repair factors RAD51 and RAD52 to chromatin in response to DNA damage. Also recruits to sites of DNA damage proteins like XPA and XPG that are involved in nucleotide excision repair and is required for this mechanism of DNA repair. Also plays a role in base excision repair (BER) probably through interaction with UNG. Also recruits SMARCAL1/HARP, which is involved in replication fork restart, to sites of DNA damage. May also play a role in telomere maintenance. The polypeptide is Replication protein A 70 kDa DNA-binding subunit (RPA1) (Pongo abelii (Sumatran orangutan)).